The sequence spans 334 residues: N-acetyl-gamma-glutamyl-phosphate reductase (334 aa).

Residue Cys154 is part of the active site.

It belongs to the NAGSA dehydrogenase family. Type 1 subfamily.

The protein localises to the cytoplasm. The catalysed reaction is N-acetyl-L-glutamate 5-semialdehyde + phosphate + NADP(+) = N-acetyl-L-glutamyl 5-phosphate + NADPH + H(+). Its pathway is amino-acid biosynthesis; L-arginine biosynthesis; N(2)-acetyl-L-ornithine from L-glutamate: step 3/4. Catalyzes the NADPH-dependent reduction of N-acetyl-5-glutamyl phosphate to yield N-acetyl-L-glutamate 5-semialdehyde. The polypeptide is N-acetyl-gamma-glutamyl-phosphate reductase (Escherichia coli (strain K12)).